Reading from the N-terminus, the 354-residue chain is MIESITSFGAATFGGWWPLIWTLVRAVCIILPLLLCVAYLILWERKLIGWMHVRVGPNRVGPMGLLQPIADVLKLLLKEVMVPSAVSRGMYIIAPLMVLMPAVAIWAVVPFQAEAVVSNINAGLLYVMAISSVGVYGVILAGWASNSKYAFLGAMRASAQMISYEIAMGFALVTVLMVTGSLNLSDIVNSQNRGFFANHGINILSWNWLSLLPMFGVYFISGVAETNRHPFDVVEGESEIVAGHMIEYSGMAFALFFLAEYINMIVISAMTATMFLGGWSAPIDAPVFNWIPGFFWLLIKVFLLLSVFIWLRASFPRYRYDQIMRLGWKIFIPLTVGWLIIVAIWLVSPWNIWK.

A run of 8 helical transmembrane segments spans residues 23-43 (LVRA…LILW), 91-111 (YIIA…VVPF), 124-144 (LLYV…AGWA), 162-182 (ISYE…TGSL), 203-223 (ILSW…ISGV), 250-270 (GMAF…ISAM), 291-311 (IPGF…FIWL), and 330-350 (IFIP…VSPW).

It belongs to the complex I subunit 1 family. In terms of assembly, NDH-1 is composed of 14 different subunits. Subunits NuoA, H, J, K, L, M, N constitute the membrane sector of the complex.

Its subcellular location is the cell inner membrane. It carries out the reaction a quinone + NADH + 5 H(+)(in) = a quinol + NAD(+) + 4 H(+)(out). In terms of biological role, NDH-1 shuttles electrons from NADH, via FMN and iron-sulfur (Fe-S) centers, to quinones in the respiratory chain. The immediate electron acceptor for the enzyme in this species is believed to be ubiquinone. Couples the redox reaction to proton translocation (for every two electrons transferred, four hydrogen ions are translocated across the cytoplasmic membrane), and thus conserves the redox energy in a proton gradient. This subunit may bind ubiquinone. The protein is NADH-quinone oxidoreductase subunit H of Ralstonia nicotianae (strain ATCC BAA-1114 / GMI1000) (Ralstonia solanacearum).